Reading from the N-terminus, the 387-residue chain is Eukaryotic translation initiation factor 3 subunit M (387 aa).

The region spanning 181 to 340 (RSSKVMIELL…RKVHISSTMH (160 aa)) is the PCI domain.

Belongs to the eIF-3 subunit M family. Component of the eukaryotic translation initiation factor 3 (eIF-3) complex. The eIF-3 complex interacts with pix.

Its subcellular location is the cytoplasm. It is found in the golgi apparatus. Its function is as follows. Component of the eukaryotic translation initiation factor 3 (eIF-3) complex, which is involved in protein synthesis of a specialized repertoire of mRNAs and, together with other initiation factors, stimulates binding of mRNA and methionyl-tRNAi to the 40S ribosome. The eIF-3 complex specifically targets and initiates translation of a subset of mRNAs involved in cell proliferation. The chain is Eukaryotic translation initiation factor 3 subunit M from Drosophila willistoni (Fruit fly).